Reading from the N-terminus, the 358-residue chain is 2-oxoisovalerate dehydrogenase subunit beta 2, mitochondrial (358 aa).

Residues 1-16 (MAAALVRRFCRGSSFP) constitute a mitochondrion transit peptide. Tyrosine 119 is a binding site for thiamine diphosphate. K(+) contacts are provided by glycine 145, leucine 147, threonine 148, aspartate 198, and asparagine 200.

As to quaternary structure, heterotetramer of alpha and beta chains. Requires thiamine diphosphate as cofactor. In terms of tissue distribution, expressed in the non-photosynthetic organs such as siliques, flowers and roots.

The protein resides in the mitochondrion matrix. It catalyses the reaction N(6)-[(R)-lipoyl]-L-lysyl-[protein] + 3-methyl-2-oxobutanoate + H(+) = N(6)-[(R)-S(8)-2-methylpropanoyldihydrolipoyl]-L-lysyl-[protein] + CO2. The branched-chain alpha-keto dehydrogenase complex catalyzes the overall conversion of alpha-keto acids to acyl-CoA and CO(2). It contains multiple copies of three enzymatic components: branched-chain alpha-keto acid decarboxylase (E1), lipoamide acyltransferase (E2) and lipoamide dehydrogenase (E3). Required during sugar starvation and acts under the control of a sugar-sensing mechanism involving Ser/Thr kinases and phosphatases. In Arabidopsis thaliana (Mouse-ear cress), this protein is 2-oxoisovalerate dehydrogenase subunit beta 2, mitochondrial (DIN4).